Here is a 147-residue protein sequence, read N- to C-terminus: Hemoglobin subunit beta-2 (147 aa).

The Globin domain maps to 3-147; that stretch reads HWTAEEKAAI…LVDGLSQGYN (145 aa). His64 and His93 together coordinate heme b.

It belongs to the globin family. Heterotetramer of two alpha chains and two beta chains. As to expression, red blood cells.

Functionally, involved in oxygen transport from the lung to the various peripheral tissues. The protein is Hemoglobin subunit beta-2 (hbb2) of Xenopus laevis (African clawed frog).